We begin with the raw amino-acid sequence, 508 residues long: Strychnine-11-hydroxylase (508 aa).

A helical transmembrane segment spans residues 5–25; it reads MSFLLLFSLCFLIHCFVFLLI. Cysteine 445 is a heme binding site.

It belongs to the cytochrome P450 family. Heme serves as cofactor.

It localises to the membrane. The enzyme catalyses beta-colubrine + reduced [NADPH--hemoprotein reductase] + O2 = 11-demethylbrucine + oxidized [NADPH--hemoprotein reductase] + H2O + H(+). It functions in the pathway alkaloid biosynthesis. Monooxygenase involved in the biosynthesis of curare monoterpene indole alkaloids (MIAs), natural products such as strychnine, a neurotoxic compound used as a pesticide to control rodents, and its pharmacologically active derivatives, including brucine, used to regulate blood pressure. Curare alkaloids act as animal glycine receptor antagonists. Catalyzes the conversion of beta-colubrine to 11-deMe brucine. The protein is Strychnine-11-hydroxylase of Strychnos nux-vomica (Poison nut).